The following is a 63-amino-acid chain: Probable rubredoxin (63 aa).

In terms of domain architecture, Rubredoxin-like spans 11–62 (MKRYKCRVCGYIYDPEKGEPRTDTPPGTPFEDLPETWRCPSCGAKKKMFKPL). Residues C16, C19, C49, and C52 each contribute to the Fe cation site.

This sequence belongs to the rubredoxin family. Fe(3+) serves as cofactor.

Its function is as follows. Rubredoxin is a small nonheme, iron protein lacking acid-labile sulfide. Its single Fe, chelated to 4 Cys, functions as an electron acceptor and may also stabilize the conformation of the molecule. In Methanothermobacter thermautotrophicus (strain ATCC 29096 / DSM 1053 / JCM 10044 / NBRC 100330 / Delta H) (Methanobacterium thermoautotrophicum), this protein is Probable rubredoxin.